We begin with the raw amino-acid sequence, 278 residues long: Digeranylgeranylglyceryl phosphate synthase (278 aa).

Transmembrane regions (helical) follow at residues 17-37, 40-60, 91-111, 129-149, 153-173, 204-224, 226-246, and 257-277; these read MASF…LEMV, LIFA…LNDI, LLVF…LMAV, IIGN…GGIA, IDVT…REII, LLLV…FFGI, YLIS…PLLI, and SRNI…GSFF.

This sequence belongs to the UbiA prenyltransferase family. DGGGP synthase subfamily. Mg(2+) serves as cofactor.

Its subcellular location is the cell membrane. The catalysed reaction is sn-3-O-(geranylgeranyl)glycerol 1-phosphate + (2E,6E,10E)-geranylgeranyl diphosphate = 2,3-bis-O-(geranylgeranyl)-sn-glycerol 1-phosphate + diphosphate. It functions in the pathway membrane lipid metabolism; glycerophospholipid metabolism. Functionally, prenyltransferase that catalyzes the transfer of the geranylgeranyl moiety of geranylgeranyl diphosphate (GGPP) to the C2 hydroxyl of (S)-3-O-geranylgeranylglyceryl phosphate (GGGP). This reaction is the second ether-bond-formation step in the biosynthesis of archaeal membrane lipids. The chain is Digeranylgeranylglyceryl phosphate synthase from Methanococcus maripaludis (strain C5 / ATCC BAA-1333).